Reading from the N-terminus, the 123-residue chain is U7 snRNA-associated Sm-like protein LSm10 (123 aa).

In terms of domain architecture, Sm spans 16 to 88; it reads SLIILLQGLQ…VRYVHIPDDV (73 aa).

It belongs to the snRNP Sm proteins family. In terms of assembly, component of the heptameric ring U7 snRNP complex, or U7 Sm protein core complex, at least composed of LSM10, LSM11, SNRPB, SNRPD3, SNRPE, SNRPF, SNRPG and U7 snRNA. Formation of the U7 snRNP is an ATP-dependent process mediated by a specialized SMN complex containing at least the Sm protein core complex and additionally, the U7-specific LSM10 and LSM11 proteins. Interacts with CLNS1A and SMN. In terms of processing, not methylated. Methylation is not necessary for interaction with SMN.

It localises to the nucleus. Functionally, appears to function in the U7 snRNP complex that is involved in histone 3'-end processing. Increases U7 snRNA levels but not histone 3'-end pre-mRNA processing activity, when overexpressed. Required for cell cycle progression from G1 to S phases. Binds specifically to U7 snRNA. Binds to the downstream cleavage product (DCP) of histone pre-mRNA in a U7 snRNP dependent manner. In Homo sapiens (Human), this protein is U7 snRNA-associated Sm-like protein LSm10 (LSM10).